Consider the following 136-residue polypeptide: Transcription antitermination protein NusB (136 aa).

Belongs to the NusB family.

Functionally, involved in transcription antitermination. Required for transcription of ribosomal RNA (rRNA) genes. Binds specifically to the boxA antiterminator sequence of the ribosomal RNA (rrn) operons. This chain is Transcription antitermination protein NusB, found in Treponema denticola (strain ATCC 35405 / DSM 14222 / CIP 103919 / JCM 8153 / KCTC 15104).